Reading from the N-terminus, the 576-residue chain is RING finger and SPRY domain-containing protein 1 (576 aa).

The signal sequence occupies residues 1 to 16; it reads MIVFGWAVFLASRSLG. Phosphoserine is present on Ser-50. The tract at residues 50–99 is disordered; it reads SGTDDSVDTQQQQAENSAVPTADTRSQPRDPVRPPRRGRGPHEPRRKKQN. Residues 57–68 show a composition bias toward polar residues; it reads DTQQQQAENSAV. Residues 83–97 show a composition bias toward basic residues; it reads PPRRGRGPHEPRRKK. In terms of domain architecture, B30.2/SPRY spans 300-483; sequence LFLKEGRQLT…CEFNFGAKPF (184 aa). Asn-314 carries N-linked (GlcNAc...) asparagine glycosylation. An RING-type zinc finger spans residues 527–562; the sequence is CSLCCDEVADTQLKPCGHSDLCMDCALQLETCPLCR.

The protein resides in the secreted. This chain is RING finger and SPRY domain-containing protein 1 (RSPRY1), found in Homo sapiens (Human).